The chain runs to 358 residues: Replication factor C subunit 5 (358 aa).

This sequence belongs to the activator 1 small subunits family. Heteropentamer of subunits rfc1, rfc2, rfc3, rfc4 and rfc5 that forms a complex (RFC) with PCNA in the presence of ATP. Two other complexes exist where rfc1 can be replaced by either ctf18 or elg1 to form the ctf18-RFC or the elg1-RFC complexes respectively.

The protein resides in the nucleus. Functionally, the elongation of primed DNA templates by DNA polymerase delta and epsilon requires the action of the accessory proteins PCNA and activator 1. This is Replication factor C subunit 5 (rfc5) from Schizosaccharomyces pombe (strain 972 / ATCC 24843) (Fission yeast).